Consider the following 330-residue polypeptide: Aspartate--ammonia ligase (330 aa).

It belongs to the class-II aminoacyl-tRNA synthetase family. AsnA subfamily.

It is found in the cytoplasm. The enzyme catalyses L-aspartate + NH4(+) + ATP = L-asparagine + AMP + diphosphate + H(+). It functions in the pathway amino-acid biosynthesis; L-asparagine biosynthesis; L-asparagine from L-aspartate (ammonia route): step 1/1. This is Aspartate--ammonia ligase from Treponema pallidum (strain Nichols).